Reading from the N-terminus, the 778-residue chain is General transcription and DNA repair factor IIH helicase subunit XPD/RAD3 (778 aa).

In terms of domain architecture, Helicase ATP-binding spans 7–285 (DLPVLFPYPK…KVDSQKLQDE (279 aa)). ATP is bound at residue 42–49 (MPSGTGKT). Cysteine 115, cysteine 133, cysteine 156, and cysteine 191 together coordinate [4Fe-4S] cluster. Positions 235-238 (DEAH) match the DEAH box motif. Residues 750 to 765 (SRKDQGGFIENENKEG) show a composition bias toward basic and acidic residues. A disordered region spans residues 750–778 (SRKDQGGFIENENKEGEQDEDEDEDIEMQ). Residues 766–778 (EQDEDEDEDIEMQ) are compositionally biased toward acidic residues.

It belongs to the helicase family. RAD3/XPD subfamily. Component of the 7-subunit TFIIH core complex composed of XPB/SSL2, XPD/RAD3, SSL1, TFB1, TFB2, TFB4 and TFB5, which is active in NER. The core complex associates with the 3-subunit CTD-kinase module TFIIK composed of CCL1, KIN28 and TFB3 to form the 10-subunit holoenzyme (holo-TFIIH) active in transcription. An additionnal subunit, TFB6, plays a role in the dissociation of the SSL2 helicase from TFIIH after transcription initiation. It depends on [4Fe-4S] cluster as a cofactor. Requires Mg(2+) as cofactor.

The protein localises to the nucleus. It catalyses the reaction Couples ATP hydrolysis with the unwinding of duplex DNA at the replication fork by translocating in the 5'-3' direction. This creates two antiparallel DNA single strands (ssDNA). The leading ssDNA polymer is the template for DNA polymerase III holoenzyme which synthesizes a continuous strand.. It carries out the reaction ATP + H2O = ADP + phosphate + H(+). In terms of biological role, ATP-dependent 5'-3' DNA helicase. Component of the general transcription and DNA repair factor IIH (TFIIH) core complex, which is involved in general and transcription-coupled nucleotide excision repair (NER) of damaged DNA and, when complexed to TFIIK, in RNA transcription by RNA polymerase II. In NER, TFIIH acts by opening DNA around the lesion to allow the excision of the damaged oligonucleotide and its replacement by a new DNA fragment. The ATP-dependent helicase activity of XPD/RAD3 is required for DNA opening. In transcription, TFIIH has an essential role in transcription initiation. When the pre-initiation complex (PIC) has been established, TFIIH is required for promoter opening and promoter escape. Phosphorylation of the C-terminal tail (CTD) of the largest subunit of RNA polymerase II by the kinase module TFIIK controls the initiation of transcription. XPD/RAD3 acts by forming a bridge between TFIIK and the core-TFIIH complex. Involved in the maintenance of the fidelity of DNA replication. Has single-stranded DNA-dependent ATPase activity. 5'-3' DNA helicase activity requires ATP (dATP partially substitutes), will unwind over 800 bp dsDNA. Able to unwind an RNA:DNA hybrid. This is General transcription and DNA repair factor IIH helicase subunit XPD/RAD3 from Saccharomyces cerevisiae (strain ATCC 204508 / S288c) (Baker's yeast).